The chain runs to 182 residues: Isopentenyl-diphosphate Delta-isomerase (182 aa).

2 residues coordinate Mn(2+): His-25 and His-32. One can recognise a Nudix hydrolase domain in the interval 30–164; it reads LLHLAFSSWL…PWAFSPWMVM (135 aa). Residue Cys-67 is part of the active site. His-69 serves as a coordination point for Mn(2+). Residue Glu-87 coordinates Mg(2+). Residues Glu-114 and Glu-116 each coordinate Mn(2+). Glu-116 is a catalytic residue.

Belongs to the IPP isomerase type 1 family. As to quaternary structure, homodimer. The cofactor is Mg(2+). Mn(2+) is required as a cofactor.

Its subcellular location is the cytoplasm. The catalysed reaction is isopentenyl diphosphate = dimethylallyl diphosphate. The protein operates within isoprenoid biosynthesis; dimethylallyl diphosphate biosynthesis; dimethylallyl diphosphate from isopentenyl diphosphate: step 1/1. Functionally, catalyzes the 1,3-allylic rearrangement of the homoallylic substrate isopentenyl (IPP) to its highly electrophilic allylic isomer, dimethylallyl diphosphate (DMAPP). The sequence is that of Isopentenyl-diphosphate Delta-isomerase from Escherichia coli O9:H4 (strain HS).